A 543-amino-acid chain; its full sequence is Aspartate/alanine antiporter (543 aa).

A run of 10 helical transmembrane segments spans residues 4 to 26, 33 to 55, 88 to 110, 117 to 139, 159 to 178, 362 to 381, 385 to 407, 428 to 450, 455 to 477, and 520 to 542; these read IGNF…GYLL, SFTL…LGVF, FGAK…AYAC, GPGI…GSSL, IPIV…LIFL, IINY…LGIV, VSGV…VQSI, SIGL…ISAI, ISVL…VICY, and VAPA…IVLL.

This sequence belongs to the AAE transporter (TC 2.A.81) family.

The protein resides in the cell membrane. Its function is as follows. Catalyzes the electrogenic exchange of aspartate with alanine. The chain is Aspartate/alanine antiporter (aspT) from Tetragenococcus halophilus (Pediococcus halophilus).